We begin with the raw amino-acid sequence, 982 residues long: MTLLEQRAVEASSIQSSPFLVRHIGPSFEDQQQMLLELGHRDLQSFVAAVVPPDILETTAPTSSLPEGCGEVQAMEELRLIAAANRVRRSLIGLGYYGTATPALIQRQVLENPAWYTAYTPYQAEISQGRLEALFNFQTLISELTGLPIANASLLDEGTAAAEAMSLSFAICKRPQAHRFLVDAEVLPQTLAVLRTRAEPLGIHLEVAEPMTFQFDAEVFGVLLQLPGRSGRLWDPTTSIQAAHEVGALATVAIDPLAQVLIAPVAEFGADIAVGSVQRFGVPMAFGGPHAAFFATLEIFKRQVPGRLVGQSVDAEGQPALRLALQTREQHIRRDKATSNICTAQVLLAVMASFYAVHHGPDGLAAIARRVLLLRAQLERGLHQLGYPVQSIARFDTIEVICREAPAVHQAAALAGFNLRVLPLGVAPEAAHGFGISFDELSTDQELKSILQILAEAAGQPVPVLEDLGNPHLEELVGLPLRQRPWLQQQVFHRYRSETELLRYLQRLVGRDLSLVHGMIPLGSCTMKLNAAAELIPISWREFAALHPFAPQDQCHGYQRLVQDLEHWFAEITGFAGVSLQPNAGSQGELAGLLVIRAWHHSRGEQQRDVCLIPTSAHGTNPATCVMAGLRVVPVACDAEGNVDLNDLASKAEAHAPQLAALMVTYPSTHGVFEPQIREICELVHGHGGQVYLDGANLNAQIGFCRPGTYGADVCHINLHKTFCIPHGGGGPGVGPIAVAAHLMPFLPGHPLAACGGEQGIGAISAAPWGSAGILPISWMYLRMMGAEGLRQASAVALLSANYLAHRLHPHYPVLFRGQAGLVAHECILDLRPLKRSAGLEVDDIAKRLMDYGFHAPTVSWPVAGTVMVEPTESESLEELNRFCDAMIAIREETAAIESGQIDPQNNPLRRAPHTLAAVTAEVWDRPYSRAEAAFPLAEQRQSKFWPAVSRIDNAYGDRNLLCSCPSVEELADNSVLKPPLV.

K721 bears the N6-(pyridoxal phosphate)lysine mark.

Belongs to the GcvP family. In terms of assembly, the glycine cleavage system is composed of four proteins: P, T, L and H. It depends on pyridoxal 5'-phosphate as a cofactor.

It catalyses the reaction N(6)-[(R)-lipoyl]-L-lysyl-[glycine-cleavage complex H protein] + glycine + H(+) = N(6)-[(R)-S(8)-aminomethyldihydrolipoyl]-L-lysyl-[glycine-cleavage complex H protein] + CO2. Its function is as follows. The glycine cleavage system catalyzes the degradation of glycine. The P protein binds the alpha-amino group of glycine through its pyridoxal phosphate cofactor; CO(2) is released and the remaining methylamine moiety is then transferred to the lipoamide cofactor of the H protein. The chain is Glycine dehydrogenase (decarboxylating) from Prochlorococcus marinus (strain MIT 9303).